Here is a 145-residue protein sequence, read N- to C-terminus: tRNA-specific adenosine deaminase (145 aa).

The CMP/dCMP-type deaminase domain occupies 1-116; it reads MREALKQAEI…SNLRYFNSKA (116 aa). His48 is a Zn(2+) binding site. Glu50 acts as the Proton donor in catalysis. Residues Cys78 and Cys81 each contribute to the Zn(2+) site.

The protein belongs to the cytidine and deoxycytidylate deaminase family. Homodimer. The cofactor is Zn(2+).

It catalyses the reaction adenosine(34) in tRNA + H2O + H(+) = inosine(34) in tRNA + NH4(+). Catalyzes the deamination of adenosine to inosine at the wobble position 34 of tRNA(Arg2). The chain is tRNA-specific adenosine deaminase from Rickettsia bellii (strain RML369-C).